A 130-amino-acid chain; its full sequence is uncharacterized protein (130 aa).

Topologically, residues 1-58 (MREQLKLFTREIVDFTFLILSGFDYYQTLLISSNSSKKRPKDSSLLSEKKKKKKKKKK) are cytoplasmic. The tract at residues 34–57 (NSSKKRPKDSSLLSEKKKKKKKKK) is disordered. Residues 59 to 79 (DVLSYLSYLKDLPFVPFLFWQ) form a helical membrane-spanning segment. Residues 80-94 (PGYSQREKNPRQHSL) lie on the Extracellular side of the membrane. A helical membrane pass occupies residues 95–115 (FIMTITKPGMISMADMNYVVS). Residues 116 to 130 (KNRSLNRPAERGGNR) are Cytoplasmic-facing.

The protein resides in the membrane. This is an uncharacterized protein from Saccharomyces cerevisiae (strain ATCC 204508 / S288c) (Baker's yeast).